The chain runs to 1031 residues: Toll-like receptor 9 (1031 aa).

A signal peptide spans 1 to 25 (MGPCHGALHPLSLLVQAAALAVALA). Residues 26 to 817 (QGTLPAFLPC…LCLDEALSWD (792 aa)) lie on the Extracellular side of the membrane. An intrachain disulfide couples C35 to C45. Residue 47-51 (WLFLK) participates in DNA binding. LRR repeat units lie at residues 62–85 (RGNV…DFVH), 87–110 (SSLR…HFPC), 122–147 (VPTL…SLVS), 150–166 (LSRT…LAGL), 167–190 (HSLR…ALQV), 198–221 (LGNL…LPPS), 223–242 (EYLL…DLAN), 243–268 (LTAL…CMEC), 283–306 (LNHL…WFHA), 308–332 (GNLM…AFQG), 333–356 (LAQL…HLHL), 363–386 (LLSL…TLRS), 390–413 (LPML…IFGA), 415–440 (PGLR…TGEV), 470–494 (CKTL…MFAR), 496–519 (SRLQ…QFMP), 520–543 (LTSL…SFTE), 545–572 (PRLE…SFVA), 574–598 (LPAL…LCSA), 600–622 (LRAL…LYLH), 627–650 (LRSL…TLDN), 652–675 (PKSL…SLVL), 676–699 (LPRL…SLPN), 701–723 (TQLQ…FFAL), 724–747 (ATRL…WFGS), and 749–772 (AGTL…AFVD). N-linked (GlcNAc...) asparagine glycosylation occurs at N64. DNA-binding positions include 72–77 (SNRIHH) and 95–109 (KWNC…MHFP). A disulfide bridge links C98 with C110. N129 is a glycosylation site (N-linked (GlcNAc...) asparagine). DNA-binding positions include Y132, R152, and 179 to 181 (YYK). An intrachain disulfide couples C178 to C184. N200 carries an N-linked (GlcNAc...) asparagine glycan. Y208 contacts DNA. N210 and N242 each carry an N-linked (GlcNAc...) asparagine glycan. 2 disulfides stabilise this stretch: C255–C268 and C258–C265. C258 is lipidated: S-palmitoyl cysteine. R262 provides a ligand contact to DNA. C265 carries the S-palmitoyl cysteine lipid modification. N-linked (GlcNAc...) asparagine glycosylation is present at N340. A disulfide bridge connects residues C470 and C500. 2 N-linked (GlcNAc...) asparagine glycosylation sites follow: N474 and N513. N-linked (GlcNAc...) asparagine glycosylation is present at N567. N669, N694, and N699 each carry an N-linked (GlcNAc...) asparagine glycan. N731 carries N-linked (GlcNAc...) asparagine glycosylation. Disulfide bonds link C764–C790 and C766–C809. Residues 818 to 838 (CFGLSLLTVALGLAVPMLHHL) form a helical membrane-spanning segment. Residues 839-1031 (CGWDLWYCFH…NFCRGPTTAE (193 aa)) are Cytoplasmic-facing. Residues 866-1011 (LPYDAFVVFD…SFWAQLGTAL (146 aa)) form the TIR domain.

It belongs to the Toll-like receptor family. As to quaternary structure, monomer and homodimer. Exists as a monomer in the absence of unmethylated cytidine-phosphate-guanosine (CpG) ligand. Proteolytic processing of an insertion loop (Z-loop) is required for homodimerization upon binding to the unmethylated CpG ligand leading to its activation. Interacts with MYD88 via their respective TIR domains. Interacts with BTK. Interacts (via transmembrane domain) with UNC93B1. Interacts with CD300LH; the interaction may promote full activation of TLR9-triggered innate responses. Interacts with CNPY3 and HSP90B1; this interaction is required for proper folding in the endoplasmic reticulum. Interacts with SMPDL3B. Interacts with CD82; this interaction is essential for TLR9-dependent myddosome formation in response to CpG stimulation. Post-translationally, activated by proteolytic cleavage of the flexible loop between repeats LRR14 and LRR15 within the ectodomain. Cleavage requires UNC93B1. Proteolytically processed by first removing the majority of the ectodomain by either asparagine endopeptidase (AEP) or a cathepsin followed by a trimming event that is solely cathepsin mediated and required for optimal receptor signaling. In terms of processing, palmitoylated by ZDHHC3 in the Golgi regulates TLR9 trafficking from the Golgi to endosomes. Depalmitoylation by PPT1 controls the release of TLR9 from UNC93B1 in endosomes.

The protein localises to the endoplasmic reticulum membrane. Its subcellular location is the endosome. It is found in the lysosome. The protein resides in the cytoplasmic vesicle. It localises to the phagosome. In terms of biological role, key component of innate and adaptive immunity. TLRs (Toll-like receptors) control host immune response against pathogens through recognition of molecular patterns specific to microorganisms. TLR9 is a nucleotide-sensing TLR which is activated by unmethylated cytidine-phosphate-guanosine (CpG) dinucleotides. Acts via MYD88 and TRAF6, leading to NF-kappa-B activation, cytokine secretion and the inflammatory response. Upon CpG stimulation, induces B-cell proliferation, activation, survival and antibody production. The sequence is that of Toll-like receptor 9 (TLR9) from Felis catus (Cat).